The sequence spans 1242 residues: Structural polyprotein (1242 aa).

The necessary for nucleocapsid assembly and virus assembly stretch occupies residues 1–36 (MFPYPTLNYSPMAPVNPMAYRDPNPPRRRWRPFRPP). A disordered region spans residues 1 to 104 (MFPYPTLNYS…KQKPGKRQRM (104 aa)). The host transcription inhibition stretch occupies residues 37–70 (LAAQIEDLRRSIANLTFKQRAPNPPAGPPAKRKK). The Supraphysiological nuclear export signal motif lies at 44-51 (LRRSIANL). Basic residues predominate over residues 66–104 (AKRKKPAPKPKPAAPKKKRQPPPAKKQKRKQKPGKRQRM). The Nuclear localization signal signature appears at 67 to 70 (KRKK). Residues 83 to 113 (KRQPPPAKKQKRKQKPGKRQRMCMKLESDKT) are binding to the viral RNA. Residues 98–112 (PGKRQRMCMKLESDK) form a ribosome-binding region. Serine 110 bears the Phosphoserine mark. The Peptidase S3 domain maps to 112 to 261 (KTFPILLNGQ…KDTPEGSEPW (150 aa)). The residue at position 113 (threonine 113) is a Phosphothreonine. Active-site charge relay system residues include histidine 138, aspartate 160, and serine 212. The functions as an uncleaved signal peptide for the precursor of protein E3/E2 stretch occupies residues 262–273 (SLTTVMCVLANI). N-linked (GlcNAc...) asparagine; by host glycosylation is present at asparagine 272. Residues 325-688 (DLETHFTQYK…YYYNRYPMTT (364 aa)) are Extracellular-facing. Residues 689–709 (IVGLCTCAAIIMVSCITSVWL) traverse the membrane as a helical segment. Over 710 to 744 (LCRTRNLCITPYRLAPNAQVPILLAVLCCVKPTRA) the chain is Cytoplasmic. Residues cysteine 717, cysteine 737, and cysteine 738 are each lipidated (S-palmitoyl cysteine; by host). Residues 717–737 (CITPYRLAPNAQVPILLAVLC) form a transient transmembrane before p62-6K protein processing region. Over 745–759 (DDTLQVLNYLWNNNQ) the chain is Extracellular. The next 2 membrane-spanning stretches (helical) occupy residues 760-780 (NFFW…MRML) and 781-801 (RCLL…GAAA). Over 802–1218 (YEHTAVMPNK…WSWLKVLVGS (417 aa)) the chain is Extracellular. Disulfide bonds link cysteine 850/cysteine 915, cysteine 863/cysteine 895, cysteine 864/cysteine 897, cysteine 869/cysteine 879, cysteine 1061/cysteine 1073, cysteine 1103/cysteine 1178, cysteine 1108/cysteine 1182, and cysteine 1130/cysteine 1172. An E1 fusion peptide loop region spans residues 885-902 (VYPFMWGGAYCFCDTENT). The helical transmembrane segment at 1219 to 1239 (TSAFIVLGLIATAVVALVLFT) threads the bilayer. Residues 1240–1242 (HKH) lie on the Cytoplasmic side of the membrane.

Part of a tetrameric complex composed of host CRM1, host importin alpha/beta dimer and the viral capsid; this complex blocks the receptor-mediated transport through the nuclear pore. Interacts with host phosphatase PPP1CA; this interaction dephosphorylates the capsid protein, which increases its ability to bind to the viral genome. Interacts with host karyopherin KPNA4; this interaction allows the nuclear import of the viral capsid protein. Interacts with spike glycoprotein E2. Interacts with host IRAK1; the interaction leads to inhibition of IRAK1-dependent signaling. In terms of assembly, the precursor of protein E3/E2 and E1 form a heterodimer shortly after synthesis. As to quaternary structure, the precursor of protein E3/E2 and E1 form a heterodimer shortly after synthesis. Processing of the precursor of protein E3/E2 into E2 and E3 results in a heterodimer of the spike glycoproteins E2 and E1. Spike at virion surface are constituted of three E2-E1 heterodimers. After target cell attachment and endocytosis, E1 change conformation to form homotrimers. Interacts with 6K protein. Processing of the precursor of protein E3/E2 into E2 and E3 results in a heterodimer of the spike glycoproteins E2 and E1. Spike at virion surface are constituted of three E2-E1 heterodimers. Interacts with 6K protein. In terms of assembly, interacts with spike glycoprotein E1. Interacts with spike glycoprotein E2. Structural polyprotein: Specific enzymatic cleavages in vivo yield mature proteins. Capsid protein is auto-cleaved during polyprotein translation, unmasking a signal peptide at the N-terminus of the precursor of E3/E2. The remaining polyprotein is then targeted to the host endoplasmic reticulum, where host signal peptidase cleaves it into pE2, 6K and E1 proteins. pE2 is further processed to mature E3 and E2 by host furin in trans-Golgi vesicle. In terms of processing, phosphorylated on serine and threonine residues. Post-translationally, palmitoylated via thioester bonds. These palmitoylations may induce disruption of the C-terminus transmembrane. This would result in the reorientation of E2 C-terminus from lumenal to cytoplasmic side. N-glycosylated. In terms of processing, palmitoylated via thioester bonds.

The protein resides in the virion. It localises to the host cytoplasm. The protein localises to the host cell membrane. Its subcellular location is the host nucleus. It is found in the virion membrane. It catalyses the reaction Autocatalytic release of the core protein from the N-terminus of the togavirus structural polyprotein by hydrolysis of a -Trp-|-Ser- bond.. Its function is as follows. Forms an icosahedral capsid with a T=4 symmetry composed of 240 copies of the capsid protein surrounded by a lipid membrane through which penetrate 80 spikes composed of trimers of E1-E2 heterodimers. The capsid protein binds to the viral RNA genome at a site adjacent to a ribosome binding site for viral genome translation following genome release. Possesses a protease activity that results in its autocatalytic cleavage from the nascent structural protein. Following its self-cleavage, the capsid protein transiently associates with ribosomes, and within several minutes the protein binds to viral RNA and rapidly assembles into icosahedric core particles. The resulting nucleocapsid eventually associates with the cytoplasmic domain of the spike glycoprotein E2 at the cell membrane, leading to budding and formation of mature virions. In case of infection, new virions attach to target cells and after clathrin-mediated endocytosis their membrane fuses with the host endosomal membrane. This leads to the release of the nucleocapsid into the cytoplasm, followed by an uncoating event necessary for the genomic RNA to become accessible. The uncoating might be triggered by the interaction of capsid proteins with ribosomes. Binding of ribosomes would release the genomic RNA since the same region is genomic RNA-binding and ribosome-binding. Specifically inhibits interleukin-1 receptor-associated kinase 1/IRAK1-dependent signaling during viral entry, representing a means by which the alphaviruses may evade innate immune detection and activation prior to viral gene expression. Inhibits host transcription. Forms a tetrameric complex with XPO1/CRM1 and the nuclear import receptor importin. This complex blocks the central channel of host nuclear pores thereby inhibiting the receptor-mediated nuclear transport and thus the host mRNA and rRNA transcription. The inhibition of transcription is linked to a cytopathic effect on the host cell. Functionally, provides the signal sequence for the translocation of the precursor of protein E3/E2 to the host endoplasmic reticulum. Furin-cleaved E3 remains associated with spike glycoprotein E1 and mediates pH protection of the latter during the transport via the secretory pathway. After virion release from the host cell, the assembly protein E3 is gradually released in the extracellular space. In terms of biological role, plays a role in viral attachment to target host cell, by binding to the cell receptor. Synthesized as a p62 precursor which is processed by furin at the cell membrane just before virion budding, giving rise to E2-E1 heterodimer. The p62-E1 heterodimer is stable, whereas E2-E1 is unstable and dissociate at low pH. p62 is processed at the last step, presumably to avoid E1 fusion activation before its final export to cell surface. E2 C-terminus contains a transitory transmembrane that would be disrupted by palmitoylation, resulting in reorientation of the C-terminal tail from lumenal to cytoplasmic side. This step is critical since E2 C-terminus is involved in budding by interacting with capsid proteins. This release of E2 C-terminus in cytoplasm occurs lately in protein export, and precludes premature assembly of particles at the endoplasmic reticulum membrane. Constitutive membrane protein involved in virus glycoprotein processing, cell permeabilization, and the budding of viral particles. Disrupts the calcium homeostasis of the cell, probably at the endoplasmic reticulum level. This leads to cytoplasmic calcium elevation. Because of its lipophilic properties, the 6K protein is postulated to influence the selection of lipids that interact with the transmembrane domains of the glycoproteins, which, in turn, affects the deformability of the bilayer required for the extreme curvature that occurs as budding proceeds. Present in low amount in virions, about 3% compared to viral glycoproteins. Its function is as follows. Class II viral fusion protein. Fusion activity is inactive as long as E1 is bound to E2 in mature virion. After virus attachment to target cell and endocytosis, acidification of the endosome would induce dissociation of E1/E2 heterodimer and concomitant trimerization of the E1 subunits. This E1 trimer is fusion active, and promotes release of viral nucleocapsid in cytoplasm after endosome and viral membrane fusion. Efficient fusion requires the presence of cholesterol and sphingolipid in the target membrane. Fusion is optimal at levels of about 1 molecule of cholesterol per 2 molecules of phospholipids, and is specific for sterols containing a 3-beta-hydroxyl group. The sequence is that of Structural polyprotein from Aedes (Human).